Reading from the N-terminus, the 436-residue chain is 3-ketoacyl-CoA thiolase (436 aa).

The Acyl-thioester intermediate role is filled by C99. Residues H392 and C422 each act as proton acceptor in the active site.

The protein belongs to the thiolase-like superfamily. Thiolase family. As to quaternary structure, heterotetramer of two alpha chains (FadJ) and two beta chains (FadI).

The protein localises to the cytoplasm. It carries out the reaction an acyl-CoA + acetyl-CoA = a 3-oxoacyl-CoA + CoA. Its pathway is lipid metabolism; fatty acid beta-oxidation. Functionally, catalyzes the final step of fatty acid oxidation in which acetyl-CoA is released and the CoA ester of a fatty acid two carbons shorter is formed. This is 3-ketoacyl-CoA thiolase from Shewanella piezotolerans (strain WP3 / JCM 13877).